We begin with the raw amino-acid sequence, 797 residues long: Xaa-Pro dipeptidyl-peptidase (797 aa).

Catalysis depends on charge relay system residues Ser370, Asp490, and His521.

The protein belongs to the peptidase S15 family. Homodimer.

It is found in the cytoplasm. It carries out the reaction Hydrolyzes Xaa-Pro-|- bonds to release unblocked, N-terminal dipeptides from substrates including Ala-Pro-|-p-nitroanilide and (sequentially) Tyr-Pro-|-Phe-Pro-|-Gly-Pro-|-Ile.. In terms of biological role, removes N-terminal dipeptides sequentially from polypeptides having unsubstituted N-termini provided that the penultimate residue is proline. The polypeptide is Xaa-Pro dipeptidyl-peptidase (Lacticaseibacillus paracasei (strain ATCC 334 / BCRC 17002 / CCUG 31169 / CIP 107868 / KCTC 3260 / NRRL B-441) (Lactobacillus paracasei)).